We begin with the raw amino-acid sequence, 375 residues long: Protein arginine N-methyltransferase 6 (375 aa).

The segment at 1-38 (MSQPKKRKLESGGGGEGGEGTEEEDGAEREAALERPRR) is disordered. Threonine 21 is modified (phosphothreonine). Residues 28–38 (EREAALERPRR) are compositionally biased toward basic and acidic residues. Residues arginine 29, arginine 35, and arginine 37 each carry the asymmetric dimethylarginine; by autocatalysis modification. An SAM-dependent MTase PRMT-type domain is found at 44-374 (DQLYYECYSD…EEKTKDFAME (331 aa)). Histidine 57, arginine 66, glycine 90, glutamate 112, and glutamate 141 together coordinate S-adenosyl-L-methionine. Active-site residues include glutamate 155 and glutamate 164.

This sequence belongs to the class I-like SAM-binding methyltransferase superfamily. Protein arginine N-methyltransferase family. PRMT6 subfamily. In terms of assembly, interacts with EPB41L3 and NCOA1. (Microbial infection) Interacts with (and methylates) HIV-1 Tat, Rev and Nucleocapsid protein p7 (NC). As to quaternary structure, (Microbial infection) Interacts with human cytomegalovirus protein UL69. Automethylation enhances its stability and antiretroviral activity. In terms of tissue distribution, highly expressed in kidney and testis.

It is found in the nucleus. The enzyme catalyses L-arginyl-[protein] + 2 S-adenosyl-L-methionine = N(omega),N(omega)-dimethyl-L-arginyl-[protein] + 2 S-adenosyl-L-homocysteine + 2 H(+). Functionally, arginine methyltransferase that can catalyze the formation of both omega-N monomethylarginine (MMA) and asymmetrical dimethylarginine (aDMA), with a strong preference for the formation of aDMA. Preferentially methylates arginyl residues present in a glycine and arginine-rich domain and displays preference for monomethylated substrates. Specifically mediates the asymmetric dimethylation of histone H3 'Arg-2' to form H3R2me2a. H3R2me2a represents a specific tag for epigenetic transcriptional repression and is mutually exclusive with methylation on histone H3 'Lys-4' (H3K4me2 and H3K4me3). Acts as a transcriptional repressor of various genes such as HOXA2, THBS1 and TP53. Repression of TP53 blocks cellular senescence. Also methylates histone H2A and H4 'Arg-3' (H2AR3me and H4R3me, respectively). Acts as a regulator of DNA base excision during DNA repair by mediating the methylation of DNA polymerase beta (POLB), leading to the stimulation of its polymerase activity by enhancing DNA binding and processivity. Methylates HMGA1. Regulates alternative splicing events. Acts as a transcriptional coactivator of a number of steroid hormone receptors including ESR1, ESR2, PGR and NR3C1. Promotes fasting-induced transcriptional activation of the gluconeogenic program through methylation of the CRTC2 transcription coactivator. May play a role in innate immunity against HIV-1 in case of infection by methylating and impairing the function of various HIV-1 proteins such as Tat, Rev and Nucleocapsid protein p7 (NC). Methylates GPS2, protecting GPS2 from ubiquitination and degradation. Methylates SIRT7, inhibiting SIRT7 histone deacetylase activity and promoting mitochondria biogenesis. This is Protein arginine N-methyltransferase 6 (PRMT6) from Homo sapiens (Human).